A 113-amino-acid polypeptide reads, in one-letter code: Putative pterin-4-alpha-carbinolamine dehydratase (113 aa).

The protein belongs to the pterin-4-alpha-carbinolamine dehydratase family.

The catalysed reaction is (4aS,6R)-4a-hydroxy-L-erythro-5,6,7,8-tetrahydrobiopterin = (6R)-L-erythro-6,7-dihydrobiopterin + H2O. The protein is Putative pterin-4-alpha-carbinolamine dehydratase of Saccharophagus degradans (strain 2-40 / ATCC 43961 / DSM 17024).